The primary structure comprises 245 residues: Platelet-derived growth factor subunit B (245 aa).

Positions 1–20 are cleaved as a signal peptide; sequence MNRCWALFLSLCCYLRLVSA. A propeptide spans 21 to 81 (removed in mature form); sequence EGDPIPEELY…ELESLSRGRR (61 aa). An N-linked (GlcNAc...) asparagine glycan is attached at asparagine 63. Intrachain disulfides connect cysteine 101–cysteine 145, cysteine 134–cysteine 182, and cysteine 138–cysteine 184. Residues 195 to 245 constitute a propeptide, removed in mature form; it reads RSPGSSQEQRARTPQTRVTIRTVRVRRPPKGKHQKFKHTHDKKALKETLGA. Positions 220–235 are enriched in basic residues; it reads RRPPKGKHQKFKHTHD. A disordered region spans residues 220 to 245; the sequence is RRPPKGKHQKFKHTHDKKALKETLGA. Residues 236 to 245 show a composition bias toward basic and acidic residues; that stretch reads KKALKETLGA.

This sequence belongs to the PDGF/VEGF growth factor family. In terms of assembly, antiparallel homodimer; disulfide-linked. Antiparallel heterodimer with PDGFA; disulfide-linked. The PDGFB homodimer interacts with PDGFRA and PDGFRB homodimers, and with heterodimers formed by PDGFRA and PDGFRB. The heterodimer composed of PDGFA and PDGFB interacts with PDGFRB homodimers, and with heterodimers formed by PDGFRA and PDGFRB. Interacts with XLKD1. Interacts with LRP1. Interacts with SORL1 (via the N-terminal ectodomain). Interacts with CD82; this interaction inhibits PDGFB-mediated signaling pathway.

The protein localises to the secreted. Growth factor that plays an essential role in the regulation of embryonic development, cell proliferation, cell migration, survival and chemotaxis. Potent mitogen for cells of mesenchymal origin. Required for normal proliferation and recruitment of pericytes and vascular smooth muscle cells in the central nervous system, skin, lung, heart and placenta. Required for normal blood vessel development, and for normal development of kidney glomeruli. Plays an important role in wound healing. Signaling is modulated by the formation of heterodimers with PDGFA. This Felis catus (Cat) protein is Platelet-derived growth factor subunit B (PDGFB).